A 75-amino-acid chain; its full sequence is Sec-independent protein translocase protein TatA (75 aa).

The chain crosses the membrane as a helical span at residues 1-21; that stretch reads MGSFSIWHWLIVLVIVLLVFG. The segment at 41–75 is disordered; that stretch reads KGMHDDDKPAGKLGDDSRSAEQAREAQAERDRDAR.

Belongs to the TatA/E family. In terms of assembly, the Tat system comprises two distinct complexes: a TatABC complex, containing multiple copies of TatA, TatB and TatC subunits, and a separate TatA complex, containing only TatA subunits. Substrates initially bind to the TatABC complex, which probably triggers association of the separate TatA complex to form the active translocon.

The protein localises to the cell inner membrane. In terms of biological role, part of the twin-arginine translocation (Tat) system that transports large folded proteins containing a characteristic twin-arginine motif in their signal peptide across membranes. TatA could form the protein-conducting channel of the Tat system. This chain is Sec-independent protein translocase protein TatA, found in Xanthomonas campestris pv. campestris (strain 8004).